We begin with the raw amino-acid sequence, 87 residues long: Small ribosomal subunit protein uS15c (87 aa).

This sequence belongs to the universal ribosomal protein uS15 family. Part of the 30S ribosomal subunit.

It is found in the plastid. It localises to the chloroplast. The protein is Small ribosomal subunit protein uS15c (rps15) of Coffea arabica (Arabian coffee).